Consider the following 525-residue polypeptide: Putative ribose/galactose/methyl galactoside import ATP-binding protein (525 aa).

The interval 1 to 30 (MFGSATANPPAQRDLPSSDSDSPTPDAQPP) is disordered. Residues 14–25 (DLPSSDSDSPTP) show a composition bias toward low complexity. 2 consecutive ABC transporter domains span residues 33–269 (LEIS…VGRE) and 279–523 (KPPG…SGHK). 65–72 (GENGAGKS) lines the ATP pocket.

The protein belongs to the ABC transporter superfamily. Carbohydrate importer 2 (CUT2) (TC 3.A.1.2) family.

The protein localises to the cell inner membrane. It carries out the reaction D-ribose(out) + ATP + H2O = D-ribose(in) + ADP + phosphate + H(+). It catalyses the reaction D-galactose(out) + ATP + H2O = D-galactose(in) + ADP + phosphate + H(+). Functionally, part of an ABC transporter complex involved in carbohydrate import. Could be involved in ribose, galactose and/or methyl galactoside import. Responsible for energy coupling to the transport system. The chain is Putative ribose/galactose/methyl galactoside import ATP-binding protein from Pseudomonas savastanoi pv. phaseolicola (strain 1448A / Race 6) (Pseudomonas syringae pv. phaseolicola (strain 1448A / Race 6)).